The chain runs to 341 residues: RNA 3'-terminal phosphate cyclase (341 aa).

Residues glutamine 102 and 283–287 (HLADQ) each bind ATP. Residue histidine 308 is the Tele-AMP-histidine intermediate of the active site.

The protein belongs to the RNA 3'-terminal cyclase family. Type 1 subfamily.

The protein localises to the cytoplasm. It catalyses the reaction a 3'-end 3'-phospho-ribonucleotide-RNA + ATP = a 3'-end 2',3'-cyclophospho-ribonucleotide-RNA + AMP + diphosphate. Catalyzes the conversion of 3'-phosphate to a 2',3'-cyclic phosphodiester at the end of RNA. The mechanism of action of the enzyme occurs in 3 steps: (A) adenylation of the enzyme by ATP; (B) transfer of adenylate to an RNA-N3'P to produce RNA-N3'PP5'A; (C) and attack of the adjacent 2'-hydroxyl on the 3'-phosphorus in the diester linkage to produce the cyclic end product. The biological role of this enzyme is unknown but it is likely to function in some aspects of cellular RNA processing. This is RNA 3'-terminal phosphate cyclase from Pseudomonas aeruginosa (strain LESB58).